Consider the following 744-residue polypeptide: 1,4-alpha-glucan branching enzyme GlgB (744 aa).

Catalysis depends on aspartate 415, which acts as the Nucleophile. The active-site Proton donor is glutamate 468.

It belongs to the glycosyl hydrolase 13 family. GlgB subfamily. Monomer.

The catalysed reaction is Transfers a segment of a (1-&gt;4)-alpha-D-glucan chain to a primary hydroxy group in a similar glucan chain.. The protein operates within glycan biosynthesis; glycogen biosynthesis. Its function is as follows. Catalyzes the formation of the alpha-1,6-glucosidic linkages in glycogen by scission of a 1,4-alpha-linked oligosaccharide from growing alpha-1,4-glucan chains and the subsequent attachment of the oligosaccharide to the alpha-1,6 position. The chain is 1,4-alpha-glucan branching enzyme GlgB from Shewanella frigidimarina (strain NCIMB 400).